A 318-amino-acid polypeptide reads, in one-letter code: MMSTLFPALNLNKDEPLPSFTVSELNDWALITMIGADKKSYLQGQVTCDVVSLAQDEITFGGHCDAKGKLWSIFQLFHHNDGYALFQRKSAIETELTEIKKYAVFSKVDISISDEILLGFTGDKALEWINQHTDSNANVRVSKFGTFAKVSDTQWLLVTTDDKKEELLSLLSEATLCDEAIWSLHHIKHALPQIDAPLCNEHIPQALNLQAINGISFKKGCYTGQETVARAKYRGINKRAMYLLSGLSEARPCAGDAIERSVGENWRKGGTIVSAYRFEDGHTLALAILPNDLDEDTQFKLQESIWEKVELPYSLNDE.

W28 and W182 together coordinate folate.

The protein belongs to the tRNA-modifying YgfZ family.

It localises to the cytoplasm. In terms of biological role, folate-binding protein involved in regulating the level of ATP-DnaA and in the modification of some tRNAs. It is probably a key factor in regulatory networks that act via tRNA modification, such as initiation of chromosomal replication. In Aliivibrio fischeri (strain ATCC 700601 / ES114) (Vibrio fischeri), this protein is tRNA-modifying protein YgfZ.